Reading from the N-terminus, the 466-residue chain is 3-isopropylmalate dehydratase large subunit (466 aa).

Residues C347, C407, and C410 each contribute to the [4Fe-4S] cluster site.

It belongs to the aconitase/IPM isomerase family. LeuC type 1 subfamily. Heterodimer of LeuC and LeuD. The cofactor is [4Fe-4S] cluster.

It carries out the reaction (2R,3S)-3-isopropylmalate = (2S)-2-isopropylmalate. Its pathway is amino-acid biosynthesis; L-leucine biosynthesis; L-leucine from 3-methyl-2-oxobutanoate: step 2/4. Catalyzes the isomerization between 2-isopropylmalate and 3-isopropylmalate, via the formation of 2-isopropylmaleate. In Buchnera aphidicola subsp. Thelaxes suberi, this protein is 3-isopropylmalate dehydratase large subunit.